Reading from the N-terminus, the 147-residue chain is Large ribosomal subunit protein uL15 (147 aa).

Residues 1–55 (MKLDNLAPQPGAKKRKRRVGRGIAAGQGASCGFGMRGQKSRSGRPTRPGFEGGQM) are disordered. A compositionally biased stretch (gly residues) spans 23-35 (IAAGQGASCGFGM).

The protein belongs to the universal ribosomal protein uL15 family. Part of the 50S ribosomal subunit.

Functionally, binds to the 23S rRNA. The sequence is that of Large ribosomal subunit protein uL15 from Synechococcus elongatus (strain ATCC 33912 / PCC 7942 / FACHB-805) (Anacystis nidulans R2).